A 1388-amino-acid polypeptide reads, in one-letter code: CRISPR-associated endonuclease Cas9 2 (1388 aa).

Residue aspartate 10 is the For RuvC-like nuclease domain of the active site. Aspartate 10, glutamate 763, and glutamate 767 together coordinate Mg(2+). The HNH Cas9-type domain occupies 771 to 928; sequence TNQGKSNSQQ…DKAGFIQRQL (158 aa). Histidine 847 (proton acceptor for HNH nuclease domain) is an active-site residue. Position 990 (histidine 990) interacts with Mg(2+). The span at 1100-1109 shows a compositional bias: basic and acidic residues; sequence EQNHGLDRGK. Residues 1100–1130 are disordered; sequence EQNHGLDRGKPKGLFNANLSSKPKPNSNENL. The tract at residues 1102-1388 is PAM-interacting domain (PI); it reads NHGLDRGKPK…RIDLAKLGEG (287 aa). The segment covering 1116 to 1129 has biased composition (polar residues); it reads ANLSSKPKPNSNEN.

This sequence belongs to the CRISPR-associated protein Cas9 family. Subtype II-A subfamily. Monomer. Binds crRNA and tracrRNA. It depends on Mg(2+) as a cofactor.

Its function is as follows. CRISPR (clustered regularly interspaced short palindromic repeat) is an adaptive immune system that provides protection against mobile genetic elements (viruses, transposable elements and conjugative plasmids). CRISPR clusters contain spacers, sequences complementary to antecedent mobile elements, and target invading nucleic acids. CRISPR clusters are transcribed and processed into CRISPR RNA (crRNA). In type II CRISPR systems correct processing of pre-crRNA requires a trans-encoded small RNA (tracrRNA), endogenous ribonuclease 3 (rnc) and this protein. The tracrRNA serves as a guide for ribonuclease 3-aided processing of pre-crRNA. Subsequently Cas9/crRNA/tracrRNA endonucleolytically cleaves linear or circular dsDNA target complementary to the spacer yielding blunt ends; Cas9 is inactive in the absence of the 2 guide RNAs (gRNA). Cas9 recognizes a 3'-G-rich protospacer adjacent motif (PAM, GGG in this organism) in the CRISPR repeat sequences to help distinguish self versus nonself, as targets within the bacterial CRISPR locus do not have PAMs. PAM recognition is also required for catalytic activity. Complements the gRNA coprocessing defect in a cas9 deletion in S.pyogenes strain 370, and cuts target DNA in Cas9:gRNAs mixing experiments with S.mutans strain UA159. The protein is CRISPR-associated endonuclease Cas9 2 of Streptococcus thermophilus (strain ATCC BAA-491 / LMD-9).